Consider the following 961-residue polypeptide: E4 ubiquitin-protein ligase UFD2 (961 aa).

The 75-residue stretch at 880–954 (DVPDEFLDPL…LCFKKQKKEE (75 aa)) folds into the U-box domain.

Belongs to the ubiquitin conjugation factor E4 family. In terms of assembly, interacts with CDC48. Interacts with the ubiquitin-like domain of RAD23 and DSK2. Interacts with PEX29.

The protein resides in the cytoplasm. The protein localises to the nucleus. The catalysed reaction is S-ubiquitinyl-[E2 ubiquitin-conjugating enzyme]-L-cysteine + [acceptor protein]-L-lysine = [E2 ubiquitin-conjugating enzyme]-L-cysteine + N(6)-ubiquitinyl-[acceptor protein]-L-lysine.. The protein operates within protein modification; protein ubiquitination. In terms of biological role, E4 ubiquitin chain-elongation enzyme specifically involved in polyubiquitin chain assembly. Binds to CDC48 and elongates mono- and diubiquitinated ERAD substrates presented by the UFD1-NPL4-CDC48/p97 (UNC) AAA ATPase complex to a chain length of 4 to 6 ubiquitin moieties. Delivers these polyubiquitinated substrates to RAD23 and DSK2, which target them to the proteasome. Has E3 ubiquitin-protein ligase activity, accepting ubiquitin from its cognate E2 ubiquitin-conjugating enzyme UBC4. Enhances ubiquitination at 'Lys-48', but not at 'Lys-29' of the Ub moiety. Promotes ubiquitin chain elongation at 'Lys-48' on the DOA10 substrate PEX29. Also involved in the proteolytic processing of the ER-bound transcription factor SPT23. The protein is E4 ubiquitin-protein ligase UFD2 (UFD2) of Saccharomyces cerevisiae (strain ATCC 204508 / S288c) (Baker's yeast).